The following is an 89-amino-acid chain: Exodeoxyribonuclease 7 small subunit (89 aa).

The protein belongs to the XseB family. Heterooligomer composed of large and small subunits.

Its subcellular location is the cytoplasm. It catalyses the reaction Exonucleolytic cleavage in either 5'- to 3'- or 3'- to 5'-direction to yield nucleoside 5'-phosphates.. Bidirectionally degrades single-stranded DNA into large acid-insoluble oligonucleotides, which are then degraded further into small acid-soluble oligonucleotides. In Chlorobium phaeobacteroides (strain DSM 266 / SMG 266 / 2430), this protein is Exodeoxyribonuclease 7 small subunit.